The following is a 188-amino-acid chain: Adenine phosphoribosyltransferase (188 aa).

The protein belongs to the purine/pyrimidine phosphoribosyltransferase family. In terms of assembly, homodimer.

It is found in the cytoplasm. The catalysed reaction is AMP + diphosphate = 5-phospho-alpha-D-ribose 1-diphosphate + adenine. It participates in purine metabolism; AMP biosynthesis via salvage pathway; AMP from adenine: step 1/1. Its function is as follows. Catalyzes a salvage reaction resulting in the formation of AMP, that is energically less costly than de novo synthesis. This chain is Adenine phosphoribosyltransferase, found in Frankia casuarinae (strain DSM 45818 / CECT 9043 / HFP020203 / CcI3).